Reading from the N-terminus, the 426-residue chain is Flotillin-1 (426 aa).

Belongs to the band 7/mec-2 family. Flotillin subfamily. Heterooligomeric complex of flotillins 1 and 2 and caveolins 1 and 2. Expressed in brain and ventral nerve cord from stage 12-16 of embryogenesis.

The protein resides in the cell membrane. It localises to the membrane. The protein localises to the caveola. In terms of biological role, may act as a scaffolding protein within caveolar membranes, functionally participating in formation of caveolae or caveolae-like vesicles. The protein is Flotillin-1 of Drosophila melanogaster (Fruit fly).